A 62-amino-acid polypeptide reads, in one-letter code: Photosystem II reaction center protein Z (62 aa).

The next 2 membrane-spanning stretches (helical) occupy residues 8–28 (SVFA…VALA) and 41–61 (FSGV…NSFI).

Belongs to the PsbZ family. As to quaternary structure, PSII is composed of 1 copy each of membrane proteins PsbA, PsbB, PsbC, PsbD, PsbE, PsbF, PsbH, PsbI, PsbJ, PsbK, PsbL, PsbM, PsbT, PsbY, PsbZ, Psb30/Ycf12, at least 3 peripheral proteins of the oxygen-evolving complex and a large number of cofactors. It forms dimeric complexes.

It localises to the plastid. The protein resides in the chloroplast thylakoid membrane. In terms of biological role, may control the interaction of photosystem II (PSII) cores with the light-harvesting antenna, regulates electron flow through the 2 photosystem reaction centers. PSII is a light-driven water plastoquinone oxidoreductase, using light energy to abstract electrons from H(2)O, generating a proton gradient subsequently used for ATP formation. This Cryptomeria japonica (Japanese cedar) protein is Photosystem II reaction center protein Z.